Consider the following 143-residue polypeptide: Peptide methionine sulfoxide reductase MsrB (143 aa).

The 124-residue stretch at 16–139 folds into the MsrB domain; that stretch reads DAELRRRLTP…NSAALNFESR (124 aa). Zn(2+)-binding residues include Cys-55, Cys-58, Cys-104, and Cys-107. Cys-128 serves as the catalytic Nucleophile.

The protein belongs to the MsrB Met sulfoxide reductase family. It depends on Zn(2+) as a cofactor.

It carries out the reaction L-methionyl-[protein] + [thioredoxin]-disulfide + H2O = L-methionyl-(R)-S-oxide-[protein] + [thioredoxin]-dithiol. The polypeptide is Peptide methionine sulfoxide reductase MsrB (Burkholderia cenocepacia (strain ATCC BAA-245 / DSM 16553 / LMG 16656 / NCTC 13227 / J2315 / CF5610) (Burkholderia cepacia (strain J2315))).